A 469-amino-acid polypeptide reads, in one-letter code: Dihydrolipoyl dehydrogenase (469 aa).

FAD contacts are provided by residues 40 to 48 (EKASLGGVC), lysine 57, and alanine 120. A disulfide bridge links cysteine 48 with cysteine 53. NAD(+) is bound by residues 186-190 (GGGAI), glutamate 209, and 275-278 (AVGV). Positions 317 and 325 each coordinate FAD. The Proton acceptor role is filled by histidine 450.

Belongs to the class-I pyridine nucleotide-disulfide oxidoreductase family. In terms of assembly, homodimer. Requires FAD as cofactor.

It localises to the cytoplasm. It carries out the reaction N(6)-[(R)-dihydrolipoyl]-L-lysyl-[protein] + NAD(+) = N(6)-[(R)-lipoyl]-L-lysyl-[protein] + NADH + H(+). In terms of biological role, lipoamide dehydrogenase is a component of the alpha-ketoacid dehydrogenase complexes. This Chlorobaculum parvum (strain DSM 263 / NCIMB 8327) (Chlorobium vibrioforme subsp. thiosulfatophilum) protein is Dihydrolipoyl dehydrogenase (lpd).